Here is a 279-residue protein sequence, read N- to C-terminus: Tryptophan 2,3-dioxygenase (279 aa).

Substrate is bound by residues 48 to 52, Y110, and R114; that span reads FIIQH. Residue H237 coordinates heme. Position 251 (T251) interacts with substrate.

The protein belongs to the tryptophan 2,3-dioxygenase family. In terms of assembly, homotetramer. It depends on heme as a cofactor.

It catalyses the reaction L-tryptophan + O2 = N-formyl-L-kynurenine. It participates in amino-acid degradation; L-tryptophan degradation via kynurenine pathway; L-kynurenine from L-tryptophan: step 1/2. Heme-dependent dioxygenase that catalyzes the oxidative cleavage of the L-tryptophan (L-Trp) pyrrole ring and converts L-tryptophan to N-formyl-L-kynurenine. Catalyzes the oxidative cleavage of the indole moiety. The polypeptide is Tryptophan 2,3-dioxygenase (Ruegeria sp. (strain TM1040) (Silicibacter sp.)).